The following is a 327-amino-acid chain: Malate dehydrogenase (327 aa).

12–18 (GAAGQIC) contacts NAD(+). Substrate-binding residues include Arg-92 and Arg-98. NAD(+) is bound by residues Asn-105, Gln-112, and 129 to 131 (TGN). Residues Asn-131 and Arg-162 each coordinate substrate. His-187 functions as the Proton acceptor in the catalytic mechanism.

It belongs to the LDH/MDH superfamily. MDH type 2 family.

It carries out the reaction (S)-malate + NAD(+) = oxaloacetate + NADH + H(+). Its function is as follows. Catalyzes the reversible oxidation of malate to oxaloacetate. This Cutibacterium acnes (strain DSM 16379 / KPA171202) (Propionibacterium acnes) protein is Malate dehydrogenase.